The following is a 190-amino-acid chain: Xanthine phosphoribosyltransferase (190 aa).

Leu20 and Asn27 together coordinate xanthine. Ala129–Ala133 is a 5-phospho-alpha-D-ribose 1-diphosphate binding site. A xanthine-binding site is contributed by Lys157.

Belongs to the purine/pyrimidine phosphoribosyltransferase family. Xpt subfamily. In terms of assembly, homodimer.

It localises to the cytoplasm. It catalyses the reaction XMP + diphosphate = xanthine + 5-phospho-alpha-D-ribose 1-diphosphate. The protein operates within purine metabolism; XMP biosynthesis via salvage pathway; XMP from xanthine: step 1/1. In terms of biological role, converts the preformed base xanthine, a product of nucleic acid breakdown, to xanthosine 5'-monophosphate (XMP), so it can be reused for RNA or DNA synthesis. This Clostridioides difficile (strain 630) (Peptoclostridium difficile) protein is Xanthine phosphoribosyltransferase.